The primary structure comprises 330 residues: Inactive hydroxysteroid dehydrogenase-like protein 1 (330 aa).

The residue at position 2 (Ala-2) is an N-acetylalanine. The required for mitochondria translocation stretch occupies residues 2–82 (AAVDSFYLLY…SGATDGIGKA (81 aa)). NADP(+) is bound by residues 74–80 (GATDGIG), Asp-125, and Lys-222.

Belongs to the short-chain dehydrogenases/reductases (SDR) family. 17-beta-HSD 3 subfamily. As to quaternary structure, interacts with STYXL1. As to expression, highly expressed in testis and ovary. Also detected in thyroid, spinal cord, adrenal gland, heart, placenta, skeletal muscle, small intestine, colon, spleen, prostate and pancreas.

It localises to the mitochondrion. The chain is Inactive hydroxysteroid dehydrogenase-like protein 1 (HSDL1) from Homo sapiens (Human).